Consider the following 1859-residue polypeptide: Y' element ATP-dependent helicase protein 1 copy 6 (1859 aa).

A Helicase ATP-binding domain is found at 861–1038 (EIYMADTPSV…LQRIGLTGLA (178 aa)). 874–881 (APPGYGKT) is a binding site for ATP. One can recognise a Helicase C-terminal domain in the interval 1095-1244 (KLLLALFEIE…EFYGLESKKG (150 aa)). Low complexity predominate over residues 1318 to 1461 (ANASTNATTN…ATTTESTNAS (144 aa)). The tract at residues 1318–1485 (ANASTNATTN…RFHPVTDINK (168 aa)) is disordered. Over residues 1462–1485 (AKEDANKDGNAEDNRFHPVTDINK) the composition is skewed to basic and acidic residues.

It belongs to the helicase family. Yeast subtelomeric Y' repeat subfamily.

In terms of biological role, catalyzes DNA unwinding and is involved in telomerase-independent telomere maintenance. In Saccharomyces cerevisiae (strain ATCC 204508 / S288c) (Baker's yeast), this protein is Y' element ATP-dependent helicase protein 1 copy 6 (YRF1-6).